Reading from the N-terminus, the 115-residue chain is Probable non-functional T cell receptor beta variable 7-3 (115 aa).

The signal sequence occupies residues 1–21 (MGTRLLCWAALCLLGADHTGA). The 94-residue stretch at 22-115 (GVSQTPSNKV…SAAYLRASSL (94 aa)) folds into the Ig-like domain.

Most probably, the alpha-beta TR is not assembled due to incorrect folding of the beta chain. Alpha-beta TR is a heterodimer composed of an alpha and beta chain; disulfide-linked. The alpha-beta TR is associated with the transmembrane signaling CD3 coreceptor proteins to form the TR-CD3 (TcR or TCR). The assembly of alpha-beta TR heterodimers with CD3 occurs in the endoplasmic reticulum where a single alpha-beta TR heterodimer associates with one CD3D-CD3E heterodimer, one CD3G-CD3E heterodimer and one CD247 homodimer forming a stable octameric structure. CD3D-CD3E and CD3G-CD3E heterodimers preferentially associate with TR alpha and TR beta chains, respectively. The association of the CD247 homodimer is the last step of TcR assembly in the endoplasmic reticulum and is required for transport to the cell surface.

The protein localises to the cell membrane. Probable non-functional open reading frame (ORF) of V region of the variable domain of T cell receptor (TR) beta chain. Non-functional ORF generally cannot participate in the synthesis of a productive T cell receptor (TR) chain due to altered V-(D)-J or switch recombination and/or splicing site (at mRNA level) and/or conserved amino acid change (protein level). Alpha-beta T cell receptors are antigen specific receptors which are essential to the immune response and are present on the cell surface of T lymphocytes. Recognize peptide-major histocompatibility (MH) (pMH) complexes that are displayed by antigen presenting cells (APC), a prerequisite for efficient T cell adaptive immunity against pathogens. Binding of alpha-beta TR to pMH complex initiates TR-CD3 clustering on the cell surface and intracellular activation of LCK that phosphorylates the ITAM motifs of CD3G, CD3D, CD3E and CD247 enabling the recruitment of ZAP70. In turn ZAP70 phosphorylates LAT, which recruits numerous signaling molecules to form the LAT signalosome. The LAT signalosome propagates signal branching to three major signaling pathways, the calcium, the mitogen-activated protein kinase (MAPK) kinase and the nuclear factor NF-kappa-B (NF-kB) pathways, leading to the mobilization of transcription factors that are critical for gene expression and essential for T cell growth and differentiation. The T cell repertoire is generated in the thymus, by V-(D)-J rearrangement. This repertoire is then shaped by intrathymic selection events to generate a peripheral T cell pool of self-MH restricted, non-autoaggressive T cells. Post-thymic interaction of alpha-beta TR with the pMH complexes shapes TR structural and functional avidity. This chain is Probable non-functional T cell receptor beta variable 7-3, found in Homo sapiens (Human).